Consider the following 538-residue polypeptide: Cytochrome P450 monooxygenase claO (538 aa).

A run of 2 helical transmembrane segments spans residues 7-27 (IGAF…KLVG) and 222-242 (INPS…PILL). A heme-binding site is contributed by cysteine 475.

Belongs to the cytochrome P450 family. Heme serves as cofactor.

Its subcellular location is the membrane. It functions in the pathway secondary metabolite biosynthesis; terpenoid biosynthesis. In terms of biological role, cytochrome P450 monooxygenase; part of the gene cluster that mediates the biosynthesis of clavilactone A, a meroterpenoid that features a unique benzo-fused ten-membered carbocyclic ring unit with an alpha,beta-epoxy-gamma-lactone moiety, forming an intriguing 10/5/3 tricyclic nested skeleton. Cytochrome P450 monooxygenases claO, claP, claQ, claU, and claW are close orthologs, suggesting that a redundant function or pseudogenes are present in the cla cluster. These monoxygenases are not involved in clavilactone A biosynthesis nor in its modification. ClaR, ClaS and ClaT are sufficient to produce clavilactone A. The biosynthesis begins with the prenyltransferase claS that transfers geranyl pyrophosphate (GPP) to hydroquinone to produces geranylhydroquinone. The cytochrome P450 monooxygenase claR then catalyzes the diradical coupling reaction between the intramolecular hydroquinone and allyl moieties to form the benzo-fused ten-membered carbocyclic ring unit of wigantol. Finally the cytochrome P450 monooxygenase claT exquisitely and stereoselectively assembles the alpha,beta-epoxy-gamma-lactone moiety, producing clavilactone A via arnebinol A. The polypeptide is Cytochrome P450 monooxygenase claO (Ampulloclitocybe clavipes (Club foot)).